The sequence spans 368 residues: Molybdenum import ATP-binding protein ModC (368 aa).

The ABC transporter domain maps to 1-230; it reads MTIKIQFKQT…HAMRPWQSFS (230 aa). 32-39 serves as a coordination point for ATP; the sequence is GRSGAGKT. The region spanning 291–362 is the Mop domain; sequence ATSIRNVLPA…VKGVSVTQRD (72 aa).

Belongs to the ABC transporter superfamily. Molybdate importer (TC 3.A.1.8) family. In terms of assembly, the complex is composed of two ATP-binding proteins (ModC), two transmembrane proteins (ModB) and a solute-binding protein (ModA).

It localises to the cell inner membrane. The enzyme catalyses molybdate(out) + ATP + H2O = molybdate(in) + ADP + phosphate + H(+). In terms of biological role, part of the ABC transporter complex ModABC involved in molybdenum import. Responsible for energy coupling to the transport system. This chain is Molybdenum import ATP-binding protein ModC, found in Vibrio parahaemolyticus serotype O3:K6 (strain RIMD 2210633).